The primary structure comprises 196 residues: FMN-dependent NADH:quinone oxidoreductase (196 aa).

S10 lines the FMN pocket.

It belongs to the azoreductase type 1 family. Homodimer. Requires FMN as cofactor.

The enzyme catalyses 2 a quinone + NADH + H(+) = 2 a 1,4-benzosemiquinone + NAD(+). The catalysed reaction is N,N-dimethyl-1,4-phenylenediamine + anthranilate + 2 NAD(+) = 2-(4-dimethylaminophenyl)diazenylbenzoate + 2 NADH + 2 H(+). In terms of biological role, quinone reductase that provides resistance to thiol-specific stress caused by electrophilic quinones. Its function is as follows. Also exhibits azoreductase activity. Catalyzes the reductive cleavage of the azo bond in aromatic azo compounds to the corresponding amines. This chain is FMN-dependent NADH:quinone oxidoreductase, found in Cereibacter sphaeroides (strain ATCC 17029 / ATH 2.4.9) (Rhodobacter sphaeroides).